A 387-amino-acid chain; its full sequence is Carbamoyl phosphate synthase small chain (387 aa).

The CPSase stretch occupies residues 1–196 (MEGVLSQLAV…FSINKQKFLF (196 aa)). The L-glutamine site is built by Ser-51, Gly-245, and Gly-247. Positions 197-384 (HVVVYDFGVK…IKLIVSQKTT (188 aa)) constitute a Glutamine amidotransferase type-1 domain. Cys-273 serves as the catalytic Nucleophile. The L-glutamine site is built by Leu-274, Gln-277, Asn-315, and Phe-318. Residues His-357 and Glu-359 contribute to the active site.

It belongs to the CarA family. In terms of assembly, composed of two chains; the small (or glutamine) chain promotes the hydrolysis of glutamine to ammonia, which is used by the large (or ammonia) chain to synthesize carbamoyl phosphate. Tetramer of heterodimers (alpha,beta)4.

It catalyses the reaction hydrogencarbonate + L-glutamine + 2 ATP + H2O = carbamoyl phosphate + L-glutamate + 2 ADP + phosphate + 2 H(+). The enzyme catalyses L-glutamine + H2O = L-glutamate + NH4(+). Its pathway is amino-acid biosynthesis; L-arginine biosynthesis; carbamoyl phosphate from bicarbonate: step 1/1. It functions in the pathway pyrimidine metabolism; UMP biosynthesis via de novo pathway; (S)-dihydroorotate from bicarbonate: step 1/3. Functionally, small subunit of the glutamine-dependent carbamoyl phosphate synthetase (CPSase). CPSase catalyzes the formation of carbamoyl phosphate from the ammonia moiety of glutamine, carbonate, and phosphate donated by ATP, constituting the first step of 2 biosynthetic pathways, one leading to arginine and/or urea and the other to pyrimidine nucleotides. The small subunit (glutamine amidotransferase) binds and cleaves glutamine to supply the large subunit with the substrate ammonia. The sequence is that of Carbamoyl phosphate synthase small chain from Buchnera aphidicola subsp. Acyrthosiphon pisum (strain APS) (Acyrthosiphon pisum symbiotic bacterium).